Here is a 570-residue protein sequence, read N- to C-terminus: Periplasmic trehalase (570 aa).

A signal peptide spans 1–34 (MITPALRHSGTLSFAIKLTVASTLLTFASLSAHA). Substrate contacts are provided by residues Arg157, 164–165 (WD), Asn201, 210–212 (RSQ), 282–284 (RPE), and Gly315. Residues Asp317 and Glu501 each act as proton donor/acceptor in the active site. Glu516 lines the substrate pocket. The tract at residues 542-570 (KPCDSVPATRPAAPGASQPAPQKQVETTP) is disordered. A compositionally biased stretch (low complexity) spans 552–570 (PAAPGASQPAPQKQVETTP).

The protein belongs to the glycosyl hydrolase 37 family. In terms of assembly, monomer.

The protein resides in the periplasm. It carries out the reaction alpha,alpha-trehalose + H2O = alpha-D-glucose + beta-D-glucose. Functionally, provides the cells with the ability to utilize trehalose at high osmolarity by splitting it into glucose molecules that can subsequently be taken up by the phosphotransferase-mediated uptake system. The polypeptide is Periplasmic trehalase (Citrobacter koseri (strain ATCC BAA-895 / CDC 4225-83 / SGSC4696)).